The chain runs to 65 residues: Large ribosomal subunit protein uL29 (65 aa).

Belongs to the universal ribosomal protein uL29 family.

This is Large ribosomal subunit protein uL29 from Acinetobacter baumannii (strain AB307-0294).